Consider the following 392-residue polypeptide: O-phospho-L-seryl-tRNA:Cys-tRNA synthase 2 (392 aa).

Residues 85-86, N190, and 213-215 contribute to the pyridoxal 5'-phosphate site; these read AR and SGH. K216 carries the post-translational modification N6-(pyridoxal phosphate)lysine.

The protein belongs to the SepCysS family. Homodimer. Interacts with SepRS. Requires pyridoxal 5'-phosphate as cofactor.

It carries out the reaction O-phospho-L-seryl-tRNA(Cys) + hydrogen sulfide + H(+) = L-cysteinyl-tRNA(Cys) + phosphate. Converts O-phospho-L-seryl-tRNA(Cys) (Sep-tRNA(Cys)) to L-cysteinyl-tRNA(Cys) (Cys-tRNA(Cys)). This Methanocorpusculum labreanum (strain ATCC 43576 / DSM 4855 / Z) protein is O-phospho-L-seryl-tRNA:Cys-tRNA synthase 2.